The primary structure comprises 238 residues: uncharacterized protein (238 aa).

The next 6 helical transmembrane spans lie at 24-44 (IFIAALIFIVITAICFTYMKN), 78-98 (GFLLSSPFIIYQITLFILPGL), 109-129 (ILFISIILFFSGIVFAYIILV), 156-176 (FILLLLFSTGIAFQIPIIQVI), 188-208 (MYAYWKYIVLGATVIAAIITP), and 216-236 (IIMSIAILALYSSGIIILKIL).

Belongs to the TatC family.

It localises to the plastid. The protein resides in the chloroplast membrane. This is an uncharacterized protein from Gracilaria tenuistipitata var. liui (Red alga).